Consider the following 177-residue polypeptide: MSRIGKKPVPVPAGVTGSVEGQTVKAKGAKGELSFVVHDEVLVKMEDGAVRVDPRDQSKEARSKWGMSRTMISNIFVGVKDGFEKKLEISGVGYRAAMQGKNLQLSLGFSHEVVYDVPAGITVAVPKPTEIVVTGIDKQQVGQVAAEIREYRGPEPYKGKGVKYAGEKIVRKEGKKK.

Belongs to the universal ribosomal protein uL6 family. In terms of assembly, part of the 50S ribosomal subunit.

Its function is as follows. This protein binds to the 23S rRNA, and is important in its secondary structure. It is located near the subunit interface in the base of the L7/L12 stalk, and near the tRNA binding site of the peptidyltransferase center. The protein is Large ribosomal subunit protein uL6 of Brucella abortus (strain S19).